An 806-amino-acid polypeptide reads, in one-letter code: Transitional endoplasmic reticulum ATPase (806 aa).

Ala-2 bears the N-acetylalanine mark. Phosphoserine is present on residues Ser-3 and Ser-7. Residue Lys-8 forms a Glycyl lysine isopeptide (Lys-Gly) (interchain with G-Cter in SUMO2) linkage. Position 13 is a phosphoserine (Ser-13). Lys-18 is covalently cross-linked (Glycyl lysine isopeptide (Lys-Gly) (interchain with G-Cter in SUMO2)). A Phosphoserine modification is found at Ser-37. An ATP-binding site is contributed by 247-253 (PGTGKTL). Lys-315 is subject to N6,N6,N6-trimethyllysine; by VCPKMT. Residues Asn-348 and His-384 each contribute to the ATP site. Position 436 is a phosphothreonine (Thr-436). Ser-462 is subject to Phosphoserine. An N6-acetyllysine mark is found at Lys-502 and Lys-505. Residue 521–526 (GCGKTL) coordinates ATP. Lys-668 is subject to N6-acetyllysine; alternate. Lys-668 carries the post-translational modification N6-succinyllysine; alternate. Phosphoserine is present on Ser-702. The interval 708-727 (RRERERQTNPSAMEVEEDDP) is disordered. Position 754 is an N6-acetyllysine (Lys-754). The tract at residues 768–806 (FGSFRFPSGNQGGAGPSQGSGGGTGGSVYTEDNDDDLYG) is disordered. Ser-770, Ser-775, and Ser-787 each carry phosphoserine. Positions 777–793 (NQGGAGPSQGSGGGTGG) are enriched in gly residues. An interaction with UBXN6 region spans residues 797-806 (TEDNDDDLYG). Positions 802-806 (DDLYG) match the PIM motif motif. Position 805 is a phosphotyrosine (Tyr-805).

The protein belongs to the AAA ATPase family. Homohexamer. Forms a ring-shaped particle of 12.5 nm diameter, that displays 6-fold radial symmetry. Part of a ternary complex containing STX5A, NSFL1C and VCP. NSFL1C forms a homotrimer that binds to one end of a VCP homohexamer. The complex binds to membranes enriched in phosphatidylethanolamine-containing lipids and promotes Golgi membrane fusion. Binds to a heterodimer of NPLOC4 and UFD1, binding to this heterodimer inhibits Golgi-membrane fusion. Interaction with VCIP135 leads to dissociation of the complex via ATP hydrolysis by VCP. Part of a ternary complex containing NPLOC4, UFD1 and VCP. Interacts with NSFL1C-like protein p37; the complex has membrane fusion activity and is required for Golgi and endoplasmic reticulum biogenesis. Interacts with SELENOS and SYVN1, as well as with DERL1 (via SHP-box motif), DERL2 and DERL3; which probably transfer misfolded proteins from the ER to VCP. Interacts with SVIP and forms a complex with SVIP and DERL1. Component of a complex required to couple retrotranslocation, ubiquitination and deglycosylation composed of NGLY1, SAKS1, AMFR, VCP and RAD23B. Part of a complex composed of STUB1/CHIP, VCP/p97, CHRNA3, and UBXN2A that modulates the ubiquitination and endoplasmic reticulum-associated degradation (ERAD) of CHRNA3. Within the complex UBXN2A acts as a scaffold protein required for the interaction of CHRNA3 with VCP/p97, this interaction also inhibits CHRNA3 ubiquitination by STUB1/CHIP and subsequently ERAD. Interacts with UBXN2A (via UBX domain); the interaction is required for the interaction of CHRNA3 in the STUB1-VCP-UBXN2A complex. Directly interacts with UBXN4 and RNF19A. Interacts with CASR. Interacts with UBE4B and YOD1. Interacts with clathrin. Interacts with RNF103. Interacts with TRIM13 and TRIM21. Component of a VCP/p97-AMFR/gp78 complex that participates in the final step of the endoplasmic reticulum-associated degradation (ERAD) of HMGCR. Interacts directly with AMFR/gp78 (via its VIM). Interacts with RHBDD1 (via C-terminal domain). Interacts with SPRTN; leading to recruitment to stalled replication forks. Interacts with WASHC5. Interacts with UBOX5. Interacts (via N-terminus) with UBXN7, UBXN8, and probably several other UBX domain-containing proteins (via UBX domains); the interactions are mutually exclusive with VIM-dependent interactions such as those with AMFR and SELENOS. Forms a complex with UBQLN1 and UBXN4. Interacts (via the PIM motif) with RNF31 (via the PUB domain). Interacts with RIGI and RNF125; interaction takes place when RIGI is ubiquitinated via 'Lys-63'-linked ubiquitin on its CARD domains, leading to recruit RNF125 and promote ubiquitination and degradation of RIGI. Interacts with BAG6. Interacts with UBXN10. Interacts with UBXN6; the interaction with UBXN6 is direct and competitive with UFD1. Forms a ternary complex with CAV1 and UBXN6. Interacts with PLAA, UBXN6 and YOD1; may form a complex involved in macroautophagy. Interacts with ANKZF1. Interacts with ubiquitin-binding protein FAF1. Interacts with ZFAND2B (via VIM motif); the interaction is direct. Interacts with ZFAND1 (via its ubiquitin-like region); this interaction occurs in an arsenite-dependent manner. Interacts with CCDC47. Interacts with UBAC2. Interacts with LMBR1L. Interacts with ATXN3. Interacts with TEX264; bridging VCP to covalent DNA-protein cross-links (DPCs). Interacts with FBXL4. In terms of processing, phosphorylated by tyrosine kinases in response to T-cell antigen receptor activation. Phosphorylated in mitotic cells. ISGylated. Post-translationally, methylation at Lys-315 catalyzed by VCPKMT is increased in the presence of ASPSCR1. Lys-315 methylation may decrease ATPase activity.

It is found in the cytoplasm. The protein resides in the cytosol. It localises to the endoplasmic reticulum. The protein localises to the nucleus. Its subcellular location is the stress granule. It carries out the reaction ATP + H2O = ADP + phosphate + H(+). Its function is as follows. Necessary for the fragmentation of Golgi stacks during mitosis and for their reassembly after mitosis. Involved in the formation of the transitional endoplasmic reticulum (tER). The transfer of membranes from the endoplasmic reticulum to the Golgi apparatus occurs via 50-70 nm transition vesicles which derive from part-rough, part-smooth transitional elements of the endoplasmic reticulum (tER). Vesicle budding from the tER is an ATP-dependent process. The ternary complex containing UFD1, VCP and NPLOC4 binds ubiquitinated proteins and is necessary for the export of misfolded proteins from the ER to the cytoplasm, where they are degraded by the proteasome. The NPLOC4-UFD1-VCP complex regulates spindle disassembly at the end of mitosis and is necessary for the formation of a closed nuclear envelope. Regulates E3 ubiquitin-protein ligase activity of RNF19A. Component of the VCP/p97-AMFR/gp78 complex that participates in the final step of the sterol-mediated ubiquitination and endoplasmic reticulum-associated degradation (ERAD) of HMGCR. Mediates the endoplasmic reticulum-associated degradation of CHRNA3 in cortical neurons as part of the STUB1-VCP-UBXN2A complex. Involved in endoplasmic reticulum stress-induced pre-emptive quality control, a mechanism that selectively attenuates the translocation of newly synthesized proteins into the endoplasmic reticulum and reroutes them to the cytosol for proteasomal degradation. Involved in clearance process by mediating G3BP1 extraction from stress granules. Also involved in DNA damage response: recruited to double-strand breaks (DSBs) sites in a RNF8- and RNF168-dependent manner and promotes the recruitment of TP53BP1 at DNA damage sites. Recruited to stalled replication forks by SPRTN: may act by mediating extraction of DNA polymerase eta (POLH) to prevent excessive translesion DNA synthesis and limit the incidence of mutations induced by DNA damage. Together with SPRTN metalloprotease, involved in the repair of covalent DNA-protein cross-links (DPCs) during DNA synthesis. Involved in interstrand cross-link repair in response to replication stress by mediating unloading of the ubiquitinated CMG helicase complex. Mediates extraction of PARP1 trapped to chromatin: recognizes and binds ubiquitinated PARP1 and promotes its removal. Required for cytoplasmic retrotranslocation of stressed/damaged mitochondrial outer-membrane proteins and their subsequent proteasomal degradation. Essential for the maturation of ubiquitin-containing autophagosomes and the clearance of ubiquitinated protein by autophagy. Acts as a negative regulator of type I interferon production by interacting with RIGI: interaction takes place when RIGI is ubiquitinated via 'Lys-63'-linked ubiquitin on its CARD domains, leading to recruit RNF125 and promote ubiquitination and degradation of RIGI. May play a role in the ubiquitin-dependent sorting of membrane proteins to lysosomes where they undergo degradation. May more particularly play a role in caveolins sorting in cells. By controlling the steady-state expression of the IGF1R receptor, indirectly regulates the insulin-like growth factor receptor signaling pathway. The chain is Transitional endoplasmic reticulum ATPase (VCP) from Homo sapiens (Human).